Here is a 971-residue protein sequence, read N- to C-terminus: Xylanolytic transcriptional activator xlnR (971 aa).

Disordered stretches follow at residues 1 to 25 (MSTT…PVGM) and 55 to 123 (GASA…PVRR). The span at 9-18 (FTSSFSPFSS) shows a compositional bias: low complexity. A compositionally biased stretch (polar residues) spans 67–96 (LRSSISKPQGQQLYSDESSAQHTQNATTGF). Residues 129–155 (CDQCNQLRTKCDGQNPCAHCIEFGLTC) constitute a DNA-binding region (zn(2)-C6 fungal-type). Composition is skewed to polar residues over residues 182–199 (NGTA…SVSS), 227–241 (NLAT…QHSD), and 249–260 (QGSQQTPHSQPS). 3 disordered regions span residues 182–263 (NGTA…SLGG), 295–316 (LHPS…GMNS), and 580–610 (RELP…NLPP).

This sequence belongs to the xlnR/xlr1 family.

The protein resides in the nucleus. Functionally, transcriptional activator of the xylanolytic system. Involved in the regulation of extracellular cellulolytic and xylanolytic genes and in the regulation of the intracellular activities of D-xylose catabolic genes in the pentose catabolic pathway (PCP) in response to the presence of D-xylose. In Aspergillus flavus (strain ATCC 200026 / FGSC A1120 / IAM 13836 / NRRL 3357 / JCM 12722 / SRRC 167), this protein is Xylanolytic transcriptional activator xlnR (xlnR).